Here is a 301-residue protein sequence, read N- to C-terminus: Acetylglutamate kinase (301 aa).

Residues 71–72 (GG), Arg-93, and Asn-198 contribute to the substrate site.

It belongs to the acetylglutamate kinase family. ArgB subfamily.

Its subcellular location is the cytoplasm. The enzyme catalyses N-acetyl-L-glutamate + ATP = N-acetyl-L-glutamyl 5-phosphate + ADP. It participates in amino-acid biosynthesis; L-arginine biosynthesis; N(2)-acetyl-L-ornithine from L-glutamate: step 2/4. Functionally, catalyzes the ATP-dependent phosphorylation of N-acetyl-L-glutamate. This Rhizorhabdus wittichii (strain DSM 6014 / CCUG 31198 / JCM 15750 / NBRC 105917 / EY 4224 / RW1) (Sphingomonas wittichii) protein is Acetylglutamate kinase.